The chain runs to 142 residues: Sec-independent protein translocase protein TatB (142 aa).

The chain crosses the membrane as a helical span at residues 1–21; it reads MFDFGFSELVVIGVVMLIVVG. The disordered stretch occupies residues 99-142; that stretch reads AAPPDNTTSAESQAAADPAAVDSSQQLELRLDTTPKQVVGSDKA. The span at 107–124 shows a compositional bias: low complexity; it reads SAESQAAADPAAVDSSQQ.

This sequence belongs to the TatB family. In terms of assembly, the Tat system comprises two distinct complexes: a TatABC complex, containing multiple copies of TatA, TatB and TatC subunits, and a separate TatA complex, containing only TatA subunits. Substrates initially bind to the TatABC complex, which probably triggers association of the separate TatA complex to form the active translocon.

It is found in the cell inner membrane. Functionally, part of the twin-arginine translocation (Tat) system that transports large folded proteins containing a characteristic twin-arginine motif in their signal peptide across membranes. Together with TatC, TatB is part of a receptor directly interacting with Tat signal peptides. TatB may form an oligomeric binding site that transiently accommodates folded Tat precursor proteins before their translocation. This chain is Sec-independent protein translocase protein TatB, found in Azoarcus sp. (strain BH72).